A 122-amino-acid chain; its full sequence is MALSKEDILKWLEEAKTAEVVELITAIEEKFGVTAAAVAVAAGPGPAAGAEEQTEFDVMLVSFGDSKINVIKEVRAITGLGLGEAKALVEAVPKAVKEGVSKADAEEIKKKLEAVGAKVEIK.

This sequence belongs to the bacterial ribosomal protein bL12 family. As to quaternary structure, homodimer. Part of the ribosomal stalk of the 50S ribosomal subunit. Forms a multimeric L10(L12)X complex, where L10 forms an elongated spine to which 2 to 4 L12 dimers bind in a sequential fashion. Binds GTP-bound translation factors.

Its function is as follows. Forms part of the ribosomal stalk which helps the ribosome interact with GTP-bound translation factors. Is thus essential for accurate translation. The chain is Large ribosomal subunit protein bL12 from Borrelia hermsii (strain HS1 / DAH).